Reading from the N-terminus, the 420-residue chain is Glucose-1-phosphate adenylyltransferase (420 aa).

Residues Y107, G172, 187–188 (EK), and S205 each bind alpha-D-glucose 1-phosphate.

This sequence belongs to the bacterial/plant glucose-1-phosphate adenylyltransferase family. Homotetramer.

The enzyme catalyses alpha-D-glucose 1-phosphate + ATP + H(+) = ADP-alpha-D-glucose + diphosphate. The protein operates within glycan biosynthesis; glycogen biosynthesis. In terms of biological role, involved in the biosynthesis of ADP-glucose, a building block required for the elongation reactions to produce glycogen. Catalyzes the reaction between ATP and alpha-D-glucose 1-phosphate (G1P) to produce pyrophosphate and ADP-Glc. This is Glucose-1-phosphate adenylyltransferase from Rhodopseudomonas palustris (strain BisB18).